A 213-amino-acid chain; its full sequence is Inactive ribonuclease-like protein 10 (213 aa).

A signal peptide spans 1 to 24 (MKLTLVQFFFMMLLLLLGLGVGLG). N128 carries an N-linked (GlcNAc...) asparagine glycan.

The protein belongs to the pancreatic ribonuclease family. In terms of processing, the N-terminus is blocked. Glycosylated. As to expression, male-specific expression in proximal caput of the epididymis.

It is found in the secreted. In terms of biological role, secreted proximal epididymal protein required for post-testicular sperm maturation and male fertility. May be involved in sperm adhesion to the egg zona pellucida. Does not have ribonuclease activity. This Sus scrofa (Pig) protein is Inactive ribonuclease-like protein 10 (RNASE10).